A 311-amino-acid chain; its full sequence is Ribosomal RNA small subunit methyltransferase H (311 aa).

Residues 32–34 (AGH), Asp-52, Phe-79, Asp-100, and Gln-107 each bind S-adenosyl-L-methionine.

Belongs to the methyltransferase superfamily. RsmH family.

The protein resides in the cytoplasm. It carries out the reaction cytidine(1402) in 16S rRNA + S-adenosyl-L-methionine = N(4)-methylcytidine(1402) in 16S rRNA + S-adenosyl-L-homocysteine + H(+). Its function is as follows. Specifically methylates the N4 position of cytidine in position 1402 (C1402) of 16S rRNA. The protein is Ribosomal RNA small subunit methyltransferase H of Staphylococcus haemolyticus (strain JCSC1435).